The following is a 345-amino-acid chain: N-acetyl-gamma-glutamyl-phosphate reductase (345 aa).

Cysteine 149 is a catalytic residue.

This sequence belongs to the NAGSA dehydrogenase family. Type 1 subfamily.

The protein resides in the cytoplasm. It catalyses the reaction N-acetyl-L-glutamate 5-semialdehyde + phosphate + NADP(+) = N-acetyl-L-glutamyl 5-phosphate + NADPH + H(+). The protein operates within amino-acid biosynthesis; L-arginine biosynthesis; N(2)-acetyl-L-ornithine from L-glutamate: step 3/4. In terms of biological role, catalyzes the NADPH-dependent reduction of N-acetyl-5-glutamyl phosphate to yield N-acetyl-L-glutamate 5-semialdehyde. This chain is N-acetyl-gamma-glutamyl-phosphate reductase, found in Bacillus cereus (strain AH187).